We begin with the raw amino-acid sequence, 453 residues long: Ribulose bisphosphate carboxylase large chain (453 aa).

A propeptide spanning residues 1-2 (MS) is cleaved from the precursor. Proline 3 bears the N-acetylproline mark. Lysine 14 carries the post-translational modification N6,N6,N6-trimethyllysine. Substrate is bound by residues asparagine 123 and threonine 173. Lysine 175 serves as the catalytic Proton acceptor. Residue lysine 177 coordinates substrate. Lysine 201, aspartate 203, and glutamate 204 together coordinate Mg(2+). Lysine 201 is subject to N6-carboxylysine. The active-site Proton acceptor is the histidine 294. Substrate contacts are provided by arginine 295, histidine 327, and serine 379.

The protein belongs to the RuBisCO large chain family. Type I subfamily. As to quaternary structure, heterohexadecamer of 8 large chains and 8 small chains; disulfide-linked. The disulfide link is formed within the large subunit homodimers. Mg(2+) serves as cofactor. The disulfide bond which can form in the large chain dimeric partners within the hexadecamer appears to be associated with oxidative stress and protein turnover.

Its subcellular location is the plastid. It is found in the chloroplast. The catalysed reaction is 2 (2R)-3-phosphoglycerate + 2 H(+) = D-ribulose 1,5-bisphosphate + CO2 + H2O. The enzyme catalyses D-ribulose 1,5-bisphosphate + O2 = 2-phosphoglycolate + (2R)-3-phosphoglycerate + 2 H(+). Functionally, ruBisCO catalyzes two reactions: the carboxylation of D-ribulose 1,5-bisphosphate, the primary event in carbon dioxide fixation, as well as the oxidative fragmentation of the pentose substrate in the photorespiration process. Both reactions occur simultaneously and in competition at the same active site. The protein is Ribulose bisphosphate carboxylase large chain of Sherardia arvensis (Blue field-madder).